We begin with the raw amino-acid sequence, 206 residues long: Guanylate kinase (206 aa).

One can recognise a Guanylate kinase-like domain in the interval 3–183 (GNLYILSAPS…ALTELKSILT (181 aa)). Residue 10-17 (APSGAGKS) coordinates ATP.

Belongs to the guanylate kinase family.

Its subcellular location is the cytoplasm. It carries out the reaction GMP + ATP = GDP + ADP. Essential for recycling GMP and indirectly, cGMP. The chain is Guanylate kinase from Haemophilus ducreyi (strain 35000HP / ATCC 700724).